Reading from the N-terminus, the 530-residue chain is Calcium-dependent protein kinase 14 (530 aa).

A lipid anchor (N-myristoyl glycine) is attached at Gly-2. Residues 54–312 form the Protein kinase domain; sequence YKLGRELGRG…AQQVLDHPWI (259 aa). Residues 60-68 and Lys-83 contribute to the ATP site; that span reads LGRGEFGVT. The Proton acceptor role is filled by Asp-178. The residue at position 218 (Ser-218) is a Phosphoserine. The tract at residues 318–348 is autoinhibitory domain; sequence ASNVSLGETVRARLKQFSVMNKLKKRALRVI. EF-hand domains lie at 355–390, 391–426, 427–462, and 463–498; these read EETS…LGIV, VPQD…IRKL, GNDE…DVDT, and TSEE…GTDW. 18 residues coordinate Ca(2+): Asp-368, Ser-370, Lys-374, Glu-379, Asp-404, Asp-406, Asp-408, Tyr-410, Glu-415, Asp-440, Asn-442, Ser-444, Tyr-446, Glu-451, Asp-476, Asn-478, Asp-480, and Lys-482. A Phosphoserine modification is found at Ser-484. Ca(2+) is bound at residue Glu-487.

This sequence belongs to the protein kinase superfamily. Ser/Thr protein kinase family. CDPK subfamily.

Its subcellular location is the membrane. The catalysed reaction is L-seryl-[protein] + ATP = O-phospho-L-seryl-[protein] + ADP + H(+). The enzyme catalyses L-threonyl-[protein] + ATP = O-phospho-L-threonyl-[protein] + ADP + H(+). With respect to regulation, activated by calcium. Autophosphorylation may play an important role in the regulation of the kinase activity. Functionally, may play a role in signal transduction pathways that involve calcium as a second messenger. This Arabidopsis thaliana (Mouse-ear cress) protein is Calcium-dependent protein kinase 14 (CPK14).